The sequence spans 172 residues: Adenine phosphoribosyltransferase (172 aa).

This sequence belongs to the purine/pyrimidine phosphoribosyltransferase family. As to quaternary structure, homodimer.

The protein resides in the cytoplasm. It catalyses the reaction AMP + diphosphate = 5-phospho-alpha-D-ribose 1-diphosphate + adenine. The protein operates within purine metabolism; AMP biosynthesis via salvage pathway; AMP from adenine: step 1/1. Its function is as follows. Catalyzes a salvage reaction resulting in the formation of AMP, that is energically less costly than de novo synthesis. In Anaeromyxobacter dehalogenans (strain 2CP-1 / ATCC BAA-258), this protein is Adenine phosphoribosyltransferase.